A 117-amino-acid chain; its full sequence is uncharacterized protein (117 aa).

Transmembrane regions (helical) follow at residues 32-52 (VSSS…VTVV), 56-76 (VGVA…VTLL), and 87-107 (LSWC…SFFF).

The protein resides in the membrane. This is an uncharacterized protein from Saccharomyces cerevisiae (strain ATCC 204508 / S288c) (Baker's yeast).